The following is a 505-amino-acid chain: 6-phosphofructo-2-kinase/fructose-2,6-bisphosphatase 2 (505 aa).

The segment at 1 to 20 (MSGASSSEQNNNSYETKTPN) is disordered. The residue at position 2 (Ser2) is an N-acetylserine. Residues 2–248 (SGASSSEQNN…VYYLMNIHVQ (247 aa)) form a 6-phosphofructo-2-kinase region. Ser29 carries the phosphoserine; by PKA modification. 45 to 53 (GLPARGKTY) is an ATP binding site. Beta-D-fructose 6-phosphate-binding residues include Arg78 and Arg102. The active site involves Asp128. Beta-D-fructose 6-phosphate contacts are provided by Thr130 and Arg136. The active site involves Cys158. Residue 167–172 (NILEVK) coordinates ATP. 3 residues coordinate beta-D-fructose 6-phosphate: Lys172, Arg193, and Tyr197. The interval 249–505 (PRTIYLCRHG…RAQDMQEGAD (257 aa)) is fructose-2,6-bisphosphatase. Arg256 contributes to the beta-D-fructose 2,6-bisphosphate binding site. His257 acts as the Tele-phosphohistidine intermediate in catalysis. Beta-D-fructose 2,6-bisphosphate is bound by residues Asn263 and Gly269. The active-site Proton donor/acceptor is the Glu326. Tyr337, Arg351, Lys355, Tyr366, Gln392, and Arg396 together coordinate beta-D-fructose 2,6-bisphosphate. Residue 348 to 351 (FALR) participates in ATP binding. Residues 392-396 (QAVMR) and Tyr428 contribute to the ATP site. Residues 445–505 (HRDKPTNNFP…RAQDMQEGAD (61 aa)) are disordered. Residues 450 to 476 (TNNFPKNQTPVRMRRNSFTPLSSSNTI) are compositionally biased toward polar residues. Residue Ser466 is modified to Phosphoserine; by AMPK. Residues Thr468 and Thr475 each carry the phosphothreonine modification. Ser483 bears the Phosphoserine; by BRAF mark. Phosphoserine is present on residues Ser486 and Ser493.

It in the C-terminal section; belongs to the phosphoglycerate mutase family. In terms of assembly, homodimer. Forms a heterodimer with PFKFB3. In terms of processing, phosphorylation by AMPK stimulates activity. As to expression, heart.

It carries out the reaction beta-D-fructose 2,6-bisphosphate + H2O = beta-D-fructose 6-phosphate + phosphate. The enzyme catalyses beta-D-fructose 6-phosphate + ATP = beta-D-fructose 2,6-bisphosphate + ADP + H(+). Its activity is regulated as follows. Phosphorylation results in the activation of the kinase activity. Functionally, synthesis and degradation of fructose 2,6-bisphosphate. In Homo sapiens (Human), this protein is 6-phosphofructo-2-kinase/fructose-2,6-bisphosphatase 2.